A 189-amino-acid polypeptide reads, in one-letter code: Ribosome maturation factor RimP (189 aa).

It belongs to the RimP family.

Its subcellular location is the cytoplasm. Required for maturation of 30S ribosomal subunits. This Mycobacteroides abscessus (strain ATCC 19977 / DSM 44196 / CCUG 20993 / CIP 104536 / JCM 13569 / NCTC 13031 / TMC 1543 / L948) (Mycobacterium abscessus) protein is Ribosome maturation factor RimP.